The chain runs to 441 residues: Trigger factor (441 aa).

One can recognise a PPIase FKBP-type domain in the interval 161–246; sequence GDQVTIDFVG…VSEVAEQILP (86 aa).

This sequence belongs to the FKBP-type PPIase family. Tig subfamily.

It localises to the cytoplasm. The enzyme catalyses [protein]-peptidylproline (omega=180) = [protein]-peptidylproline (omega=0). Functionally, involved in protein export. Acts as a chaperone by maintaining the newly synthesized protein in an open conformation. Functions as a peptidyl-prolyl cis-trans isomerase. The chain is Trigger factor from Marinomonas sp. (strain MWYL1).